Reading from the N-terminus, the 539-residue chain is E3 ubiquitin-protein ligase arc-1 (539 aa).

The RING-type zinc finger occupies Cys-6 to Arg-53. Residues Leu-103–Leu-149 form a B box-type zinc finger. Positions Glu-369 to Val-539 are ARF-like. GTP-binding positions include Gly-376–Thr-383, Asp-422–Leu-426, and Asn-481–Asp-484.

In the C-terminal section; belongs to the small GTPase superfamily. Arf family.

It catalyses the reaction S-ubiquitinyl-[E2 ubiquitin-conjugating enzyme]-L-cysteine + [acceptor protein]-L-lysine = [E2 ubiquitin-conjugating enzyme]-L-cysteine + N(6)-ubiquitinyl-[acceptor protein]-L-lysine.. It participates in protein modification; protein ubiquitination. Its function is as follows. Acts as an E3 ubiquitin-protein ligase. This chain is E3 ubiquitin-protein ligase arc-1 (arc-1), found in Caenorhabditis elegans.